The sequence spans 199 residues: MARCKS-related protein (199 aa).

The segment at Met-1–Glu-199 is disordered. Residue Gly-2 is the site of N-myristoyl glycine attachment. At Thr-14 the chain carries Phosphothreonine. Residues Glu-16–Ala-26 show a composition bias toward low complexity. A phosphoserine mark is found at Ser-22, Ser-36, and Ser-48. Residues Gly-53–Ala-64 are compositionally biased toward low complexity. Ser-71 is modified (phosphoserine). Residues Ala-76–Thr-85 show a composition bias toward basic and acidic residues. Thr-85 carries the post-translational modification Phosphothreonine. Positions Pro-86–Phe-98 are enriched in basic residues. Positions Lys-87 to Lys-110 are effector domain involved in lipid-binding and calmodulin-binding. Ser-93, Ser-101, and Ser-104 each carry phosphoserine; by PKC. A Phosphoserine modification is found at Ser-119. The residue at position 120 (Ser-120) is a Phosphoserine; by MAPK8. The residue at position 135 (Ser-135) is a Phosphoserine. The residue at position 148 (Thr-148) is a Phosphothreonine; by MAPK8. Phosphoserine is present on Ser-151. Residues Ala-156–Gly-167 show a composition bias toward low complexity. Thr-170 is modified (phosphothreonine). Positions Ser-181–Glu-199 are enriched in low complexity. Thr-182 bears the Phosphothreonine; by MAPK8 mark. Thr-191 carries the post-translational modification Phosphothreonine.

It belongs to the MARCKS family. As to quaternary structure, binds to filamentous actin (F-actin), but not to monomeric G-actin, independently of its phosphorylation status. Interacts with calmodulin. Post-translationally, phosphorylated. Phosphorylation at Ser-120 and Thr-182 is non-redundantly catalyzed by MAPK8 in vivo. Phosphorylation at Thr-148 is preferentially catalyzed by MAPK8 in vivo, but this modification can also be catalyzed by other kinases in the absence of MAPK8. May be phosphorylated by protein kinase C, which disrupts the interaction with calmodulin.

It is found in the cytoplasm. The protein resides in the cytoskeleton. Its subcellular location is the cell membrane. Its function is as follows. Controls cell movement by regulating actin cytoskeleton homeostasis and filopodium and lamellipodium formation. When unphosphorylated, induces cell migration. When phosphorylated by MAPK8, induces actin bundles formation and stabilization, thereby reducing actin plasticity, hence restricting cell movement, including neuronal migration. May be involved in coupling the protein kinase C and calmodulin signal transduction systems. In Oryctolagus cuniculus (Rabbit), this protein is MARCKS-related protein (MARCKSL1).